We begin with the raw amino-acid sequence, 583 residues long: Atlastin-2 (583 aa).

The tract at residues 1-44 is disordered; the sequence is MAEGDEAARGQQPHQGLWRRRRTSDPSAAVNHVSSTTSLGENYE. The interval 1 to 60 is N-terminal hypervariable region (HVR); sequence MAEGDEAARGQQPHQGLWRRRRTSDPSAAVNHVSSTTSLGENYEDDDLVNSDEVMKKPCP. The Cytoplasmic portion of the chain corresponds to 1–476; that stretch reads MAEGDEAARG…NIFYAARTPA (476 aa). Phosphoserine is present on Ser-24. The GB1/RHD3-type G domain maps to 91–336; that stretch reads DLNIVVVSVA…LVPLLLAPEN (246 aa). 9 residues coordinate GDP: Arg-104, Lys-105, Gly-106, Lys-107, Ser-108, Phe-109, Gln-175, Arg-244, and Asp-245. GTP is bound by residues Arg-104, Lys-105, Gly-106, Lys-107, Ser-108, and Phe-109. Ser-108 lines the Mg(2+) pocket. Positions 244 and 245 each coordinate GTP. Residues 256–284 adopt a coiled-coil conformation; that stretch reads LEGGKQFLEKRLQVKQNQHEELQNVRKHI. N6-methyllysine is present on Lys-270. Positions 303 and 306 each coordinate GDP. Residue Val-303 participates in GTP binding. Residues 374-465 are 3HB (three-helix bundle) domain; the sequence is MLQATAEANN…YANFIKHNDG (92 aa). The interval 466 to 474 is linker; that stretch reads KNIFYAART. Residues 477–497 form a helical membrane-spanning segment; the sequence is TLFAVMFAMYIISGLTGFIGL. Residues 498–499 are Lumenal-facing; the sequence is NS. The helical transmembrane segment at 500 to 520 threads the bilayer; the sequence is IAVLCNLVMGLALIFLCTWAY. Residues 521–583 are Cytoplasmic-facing; the sequence is VKYSGEFREI…VSHHARLKTD (63 aa). The tract at residues 547 to 583 is autoinhibitory domain; the sequence is KPLGDNLMEENIRQSVTNSIKAGLTDQVSHHARLKTD.

It belongs to the TRAFAC class dynamin-like GTPase superfamily. GB1/RHD3 GTPase family. GB1 subfamily. As to quaternary structure, monomeric and homodimeric. The homodimer, transiently formed by two molecules on opposing membranes, is the active form mediating ER membrane fusion. Interacts with REEP5 and RTN3; these proteins are involved in endoplasmic reticulum tubular network organization. Interacts with ZFYVE27; both proteins are involved in endoplasmic reticulum tubular network organization. As to expression, expressed in peripheral tissues (at protein level).

The protein resides in the endoplasmic reticulum membrane. The enzyme catalyses GTP + H2O = GDP + phosphate + H(+). Its activity is regulated as follows. With its alternative C-terminus disrupting the autoinhibitory domain, this brain-specific isoform is probably more active at fusing ER membranes. Its function is as follows. Atlastin-2 (ATL2) is a membrane-anchored GTPase that mediates the GTP-dependent fusion of endoplasmic reticulum (ER) membranes, maintaining the continuous ER network. It facilitates the formation of three-way junctions where ER tubules intersect. Two atlastin-2 on neighboring ER tubules bind GTP and form loose homodimers through the GB1/RHD3-type G domains and 3HB regions. Upon GTP hydrolysis, the 3HB regions tighten, pulling the membranes together to drive their fusion. After fusion, the homodimer disassembles upon release of inorganic phosphate (Pi). Subsequently, GDP dissociates, resetting the monomers to a conformation ready for a new fusion cycle. This chain is Atlastin-2, found in Homo sapiens (Human).